The sequence spans 933 residues: Bifunctional uridylyltransferase/uridylyl-removing enzyme (933 aa).

The segment at 1–379 (MAKISLKLDE…TFQRRKRKLA (379 aa)) is uridylyltransferase. The tract at residues 380–736 (GTSDFIVDNH…VKTHQFEAVT (357 aa)) is uridylyl-removing. Residues 496 to 619 (VDEHLIRCIG…VQSVERLKLL (124 aa)) form the HD domain. ACT domains are found at residues 737–818 (EITV…EMIE) and 848–922 (VIEV…GIAP).

It belongs to the GlnD family. Mg(2+) is required as a cofactor.

The catalysed reaction is [protein-PII]-L-tyrosine + UTP = [protein-PII]-uridylyl-L-tyrosine + diphosphate. It catalyses the reaction [protein-PII]-uridylyl-L-tyrosine + H2O = [protein-PII]-L-tyrosine + UMP + H(+). Its activity is regulated as follows. Uridylyltransferase (UTase) activity is inhibited by glutamine, while glutamine activates uridylyl-removing (UR) activity. Its function is as follows. Modifies, by uridylylation and deuridylylation, the PII regulatory proteins (GlnB and homologs), in response to the nitrogen status of the cell that GlnD senses through the glutamine level. Under low glutamine levels, catalyzes the conversion of the PII proteins and UTP to PII-UMP and PPi, while under higher glutamine levels, GlnD hydrolyzes PII-UMP to PII and UMP (deuridylylation). Thus, controls uridylylation state and activity of the PII proteins, and plays an important role in the regulation of nitrogen fixation and metabolism. The polypeptide is Bifunctional uridylyltransferase/uridylyl-removing enzyme (Mesorhizobium japonicum (strain LMG 29417 / CECT 9101 / MAFF 303099) (Mesorhizobium loti (strain MAFF 303099))).